The chain runs to 173 residues: Putative metal-dependent hydrolase BC_2708 (173 aa).

Residues His65, His156, and His160 each contribute to the Zn(2+) site.

Belongs to the metal hydrolase YfiT family. Homodimer. Zn(2+) serves as cofactor.

The protein localises to the cytoplasm. Functionally, possible metal-dependent hydrolase. The protein is Putative metal-dependent hydrolase BC_2708 of Bacillus cereus (strain ATCC 14579 / DSM 31 / CCUG 7414 / JCM 2152 / NBRC 15305 / NCIMB 9373 / NCTC 2599 / NRRL B-3711).